The following is a 114-amino-acid chain: Large ribosomal subunit protein bL19 (114 aa).

Belongs to the bacterial ribosomal protein bL19 family.

In terms of biological role, this protein is located at the 30S-50S ribosomal subunit interface and may play a role in the structure and function of the aminoacyl-tRNA binding site. The sequence is that of Large ribosomal subunit protein bL19 from Halalkalibacterium halodurans (strain ATCC BAA-125 / DSM 18197 / FERM 7344 / JCM 9153 / C-125) (Bacillus halodurans).